Here is a 312-residue protein sequence, read N- to C-terminus: MSAFSEAALEKKLSELSNSQQSVQTLSLWLIHHRKHSRPIVTVWERELRKAKPNRKLTFLYLANDVIQNSKRKGPEFTKDFAPVIVEAFKHVSSETDESCKKHLGRVLSIWEERSVYENDVLEQLKQALYGDKKPRKRTYEQIKVDENENCSSLGSPSEPPQTLDLVRALQDLENAASGDAAVHQRIASLPVEVQEVSLLDKITDKESGERLSKMVEDACMLLADYNGRLAAEIDDRKQLTRMLADFLRCQKEALAEKEHKLEEYKRKLARVSLVRKELRSRIQSLPDLSRLPNVTGSHMHLPFAGDIYSED.

Residue S2 is modified to N-acetylserine. Positions 2–133 constitute a CID domain; sequence SAFSEAALEK…QLKQALYGDK (132 aa). Residues S153, S156, and S285 each carry the phosphoserine modification. Residues 244 to 286 adopt a coiled-coil conformation; that stretch reads LADFLRCQKEALAEKEHKLEEYKRKLARVSLVRKELRSRIQSL.

Belongs to the UPF0400 (RTT103) family. May form a heterodimer with RPRD1B. Associates with the RNA polymerase II subunit POLR2A (via CTD phosphorylated at 'Ser-2' and 'Ser-7' of the heptad repeats).

The protein resides in the nucleus. Its function is as follows. Interacts with phosphorylated C-terminal heptapeptide repeat domain (CTD) of the largest RNA polymerase II subunit POLR2A, and participates in dephosphorylation of the CTD by RPAP2. May act as a negative regulator of cyclin-D1 (CCND1) and cyclin-E (CCNE1) in the cell cycle. In Pongo abelii (Sumatran orangutan), this protein is Regulation of nuclear pre-mRNA domain-containing protein 1A (RPRD1A).